Here is a 1320-residue protein sequence, read N- to C-terminus: Sal-like protein 3 (1320 aa).

Residues 1-11 show a composition bias toward basic residues; sequence MSRRKQAKPQH. The interval 1–49 is disordered; that stretch reads MSRRKQAKPQHLKSDEELPPQDGASEHGVPGDGAEDADSGSESRSGSEE. Low complexity predominate over residues 40–49; it reads GSESRSGSEE. Residues 51–73 form a C2H2-type 1; atypical zinc finger; sequence SVCEKCCAEFFKWADFLQHKKTC. Disordered stretches follow at residues 84–166 and 271–367; these read DDEP…AFSM and LSAG…NLPN. The segment covering 88–100 has biased composition (pro residues); it reads APPSEDFPEPSPA. The residue at position 109 (serine 109) is a Phosphoserine. Positions 121-131 are enriched in basic and acidic residues; the sequence is SEVKAATKEAE. Positions 143–160 are enriched in pro residues; the sequence is PPGPSVPPPPPALPPQPE. Over residues 271–289 the composition is skewed to low complexity; sequence LSAGPATASAGSGSTLPAA. The span at 295-311 shows a compositional bias: polar residues; that stretch reads HLSQPASGTSTPCSTSA. Composition is skewed to low complexity over residues 323-342 and 355-367; these read STGP…GNAV and PGPL…NLPN. 2 C2H2-type zinc fingers span residues 427 to 449 and 455 to 477; these read HKCR…LRSH and FKCN…FQRH. The disordered stretch occupies residues 534–623; the sequence is GLQLPPTVPG…RTGDAPVVGG (90 aa). Polar residues predominate over residues 543-554; sequence GTHNYTDSPSIT. A compositionally biased stretch (low complexity) spans 555–568; it reads PVSRSPQRPSPASS. The segment covering 569–583 has biased composition (polar residues); that stretch reads ECTSLSPGLNNTESG. 3 consecutive C2H2-type zinc fingers follow at residues 692–714, 720–742, and 752–774; these read NQCV…YRTH, FKCK…FGVH, and HSCP…IRMH. 2 disordered regions span residues 807–846 and 878–972; these read SSFD…PPSP and VENG…GHPG. A compositionally biased stretch (acidic residues) spans 809-823; that stretch reads FDDDIDENSMEEDSE. 2 stretches are compositionally biased toward low complexity: residues 834-846 and 902-923; these read PLLS…PPSP and RSAG…PAHS. Residue serine 932 is modified to Phosphoserine. 4 C2H2-type zinc fingers span residues 997-1019, 1025-1047, 1133-1155, and 1161-1183; these read TVCG…YRSH, FVCT…LLTH, HNCQ…ERTH, and FGCT…MGTH. Position 1197 is a phosphoserine (serine 1197).

The protein belongs to the sal C2H2-type zinc-finger protein family. In adult brain, testis and kidney. In lower levels also in adult ovaries and embryonic stem cells. In embryo in developing neuroectoderm of brain, inner ear and spinal cord. Also weakly and transiently expressed in embryonic branchial arches, notochord, limb buds and heart.

Its subcellular location is the nucleus. Functionally, probable transcription factor. The protein is Sal-like protein 3 (Sall3) of Mus musculus (Mouse).